We begin with the raw amino-acid sequence, 107 residues long: UPF0145 protein Sfri_2095 (107 aa).

This sequence belongs to the UPF0145 family.

The polypeptide is UPF0145 protein Sfri_2095 (Shewanella frigidimarina (strain NCIMB 400)).